A 362-amino-acid polypeptide reads, in one-letter code: Endolytic peptidoglycan transglycosylase RlpA (362 aa).

The first 17 residues, 1–17 (MRKQWLGICIAAGMLAA), serve as a signal peptide directing secretion. Residue Cys18 is the site of N-palmitoyl cysteine attachment. Cys18 carries S-diacylglycerol cysteine lipidation. The disordered stretch occupies residues 198-276 (PDLSGGAGTS…PSTTPATSPA (79 aa)). The segment covering 262-276 (PVVTAPSTTPATSPA) has biased composition (low complexity). The region spanning 285–361 (QSASGNFMVQ…AQLQSFITTA (77 aa)) is the SPOR domain.

Belongs to the RlpA family.

It is found in the cell membrane. Lytic transglycosylase with a strong preference for naked glycan strands that lack stem peptides. This Escherichia coli (strain K12) protein is Endolytic peptidoglycan transglycosylase RlpA.